A 731-amino-acid polypeptide reads, in one-letter code: Two pore channel protein 2 (731 aa).

Residues 1–68 lie on the Cytoplasmic side of the membrane; that stretch reads MAAEEQPLLG…RWYYSNVCQR (68 aa). A helical membrane pass occupies residues 69–89; sequence VLGFIIFLILILAFVEVPSSF. Residues 90-111 are Extracellular-facing; that stretch reads TKTADVRYRSQPWQPPCGLTET. The helical transmembrane segment at 112–132 threads the bilayer; sequence IEAFCLLAFLVDLSVKGYLVG. The Cytoplasmic portion of the chain corresponds to 133 to 139; sequence QAQLQQN. The helical transmembrane segment at 140-160 threads the bilayer; that stretch reads LWLLAYFMVLVVSVVDWIVSL. Residues 161–167 lie on the Extracellular side of the membrane; sequence SLACEEP. Residues 168-188 traverse the membrane as a helical segment; that stretch reads LRMRRLLRPFFLLQNSSMMKK. Residues 187–191 are interaction with phosphatidylinositol 3,5-bisphosphate; sequence KKTLK. Residues 189–203 lie on the Cytoplasmic side of the membrane; it reads TLKCIRWSLPEMASV. Residues 204–224 traverse the membrane as a helical segment; it reads GLLLAIHLCLFTIIGMLLFTI. Residues 225-238 are Extracellular-facing; the sequence is GEKDEAQDQERLAY. Positions 239 to 263 form an intramembrane region, helical; Pore-forming; it reads FRNLPEALTSLLVLLTTSNNPDVMI. At 264 to 270 the chain is on the extracellular side; the sequence is PAYTQNR. The chain crosses the membrane as a helical span at residues 271 to 291; the sequence is AFALFFIVFTLIGSLFLMNLL. Over 292–417 the chain is Cytoplasmic; that stretch reads TAIIYNQFRG…TAQFIFSHHY (126 aa). Residues 418–438 traverse the membrane as a helical segment; that stretch reads FDYLGNLVALGNLLSICVFLV. The Extracellular portion of the chain corresponds to 439-449; that stretch reads LDSDLLPGERD. The chain crosses the membrane as a helical span at residues 450–470; sequence DFVLGILDYIFILYYLLELLF. Residues 471–486 lie on the Cytoplasmic side of the membrane; sequence KVFALGLPGYLSYHSN. The chain crosses the membrane as a helical span at residues 487-507; the sequence is VFDGLLTIILLVSEICTLAVY. Residues 508–524 lie on the Extracellular side of the membrane; that stretch reads RLPHSGWKPEQYGPLSL. Residues 525 to 542 form a helical membrane-spanning segment; the sequence is WDMTRLMNTLIVFRFLRI. At 543 to 564 the chain is on the cytoplasmic side; that stretch reads IPNIKPMAEVANTILGLIPNLR. A helical transmembrane segment spans residues 565–585; sequence AFGGILVVAYYVFAMIGINLF. The Extracellular portion of the chain corresponds to 586–618; sequence RGVIVPPGNSSLVPDNNSAVCGSFEQLGYWPNN. 2 N-linked (GlcNAc...) asparagine glycosylation sites follow: Asn-594 and Asn-601. The helical; Pore-forming intramembrane region spans 619–641; it reads FDDFAAALITLWNVMVVNNWQVI. Residues 642–656 are Extracellular-facing; the sequence is LEAYKRYAGPWSMVY. Residues 657 to 677 form a helical membrane-spanning segment; it reads FVLWWLVSSVIWINLFLALLL. Residues 678–731 lie on the Cytoplasmic side of the membrane; that stretch reads ENFLHRWDPQGHKQLLVGTKQMSVELMFRDILEEPKEEELMEKLHKHPHLHLCR.

It belongs to the calcium channel alpha-1 subunit (TC 1.A.1.11) family. Two pore calcium channel subfamily. In terms of assembly, homodimer. Interacts with LRRK2. Interacts with HAX1. Interacts with MTOR; the interaction is required for TPCN2 ATP sensitivity. Found in a complex with LSM12, TPCN1 and TPCN2. Interacts with LSM12. In terms of processing, N-glycosylated. Widely expressed. Highly expressed in macrophages. Expressed in pigmented cells.

It is found in the late endosome membrane. Its subcellular location is the lysosome membrane. The protein resides in the melanosome membrane. The enzyme catalyses Ca(2+)(in) = Ca(2+)(out). It carries out the reaction Na(+)(in) = Na(+)(out). With respect to regulation, regulated by Mg(2+) ions, cytosolic Mg(2+) selectively inhibits outward current while lysosomal Mg(2+) modestly inhibits both the outward and inward currents. In the absence of Mg(2+), NAADP readily activates TPCN2, with properties similar to PI(3,5)P2. Na(+) current is inhibited by ATP in a MTORC-dependent manner. ATP sensitivity is independent of PI(3,5)P2. Both current elicited by PI(3,5)P2 as well as NAADP are inhibited by tetrandrine. Its function is as follows. Intracellular channel initially characterized as a non-selective Ca(2+)-permeable channel activated by NAADP (nicotinic acid adenine dinucleotide phosphate), it is also a highly-selective Na(+) channel activated directly by PI(3,5)P2 (phosphatidylinositol 3,5-bisphosphate). Localizes to the lysosomal and late endosome membranes where it regulates organellar membrane excitability, membrane trafficking, and pH homeostasis. Is associated with a plethora of physiological processes, including mTOR-dependent nutrient sensing, skin pigmentation and autophagy. Ion selectivity is not fixed but rather agonist-dependent and under defined ionic conditions, can be readily activated by both NAADP and PI(3,5)P2. As calcium channel, it increases the pH in the lysosomal lumen, as sodium channel, it promotes lysosomal exocytosis. Plays a crucial role in endolysosomal trafficking in the endolysosomal degradation pathway and is potentially involved in the homeostatic control of many macromolecules and cell metabolites. Also expressed in melanosomes of pigmented cells where mediates a Ca(2+) channel and/or PI(3,5)P2-activated melanosomal Na(+) channel to acidify pH and inhibit tyrosinase activity required for melanogenesis and pigmentation. Unlike the voltage-dependent TPCN1, TPCN2 is voltage independent and can be activated solely by PI(3,5)P2 binding. In contrast, PI(4,5)P2, PI(3,4)P2, PI(3)P and PI(5)P have no obvious effect on channel activation. Functionally, (Microbial infection) During Ebola virus (EBOV) infection, controls the movement of endosomes containing virus particles and is required by EBOV to escape from the endosomal network into the cell cytoplasm. This chain is Two pore channel protein 2, found in Mus musculus (Mouse).